Reading from the N-terminus, the 578-residue chain is A-type ATP synthase subunit A (578 aa).

An ATP-binding site is contributed by 228–235; sequence GPFGSGKT.

It belongs to the ATPase alpha/beta chains family. Has multiple subunits with at least A(3), B(3), C, D, E, F, H, I and proteolipid K(x).

It is found in the cell membrane. The catalysed reaction is ATP + H2O + 4 H(+)(in) = ADP + phosphate + 5 H(+)(out). In terms of biological role, produces ATP from ADP in the presence of a proton gradient across the membrane. The archaeal alpha chain is a catalytic subunit. Functionally, component of the A-type ATP synthase that produces ATP from ADP in the presence of a proton gradient across the membrane. The A chain is the catalytic subunit. This is A-type ATP synthase subunit A from Methanosarcina barkeri.